The chain runs to 229 residues: Uracil-DNA glycosylase (229 aa).

The active-site Proton acceptor is the aspartate 65.

Belongs to the uracil-DNA glycosylase (UDG) superfamily. UNG family.

Its subcellular location is the cytoplasm. It carries out the reaction Hydrolyzes single-stranded DNA or mismatched double-stranded DNA and polynucleotides, releasing free uracil.. In terms of biological role, excises uracil residues from the DNA which can arise as a result of misincorporation of dUMP residues by DNA polymerase or due to deamination of cytosine. This is Uracil-DNA glycosylase from Limosilactobacillus fermentum (strain NBRC 3956 / LMG 18251) (Lactobacillus fermentum).